A 457-amino-acid polypeptide reads, in one-letter code: uncharacterized protein (457 aa).

Positions 5–63 constitute a TRAM domain; sequence PVKKNDVIEVEIIDLTHEGLGVAKVDHYPLFIENALPGEKLEIKVLKTGKSFGYGKVLT. S-adenosyl-L-methionine-binding residues include Q287, Y316, E337, and D385. Catalysis depends on C412, which acts as the Nucleophile.

The protein belongs to the class I-like SAM-binding methyltransferase superfamily. RNA M5U methyltransferase family.

This is an uncharacterized protein from Enterococcus faecalis (strain ATCC 700802 / V583).